The chain runs to 148 residues: Antitoxin Xre (148 aa).

The protein belongs to the MbcA/ParS/Xre antitoxin family. Homodimer. Forms a complex with cognate toxin Rse.

Its function is as follows. Antitoxin component of a type II toxin-antitoxin (TA) system. Neutralizes the NAD(+) depleting activity of cognate toxin Res. The chain is Antitoxin Xre from Photorhabdus laumondii subsp. laumondii (strain DSM 15139 / CIP 105565 / TT01) (Photorhabdus luminescens subsp. laumondii).